The sequence spans 458 residues: A-type ATP synthase subunit B (458 aa).

Belongs to the ATPase alpha/beta chains family. As to quaternary structure, has multiple subunits with at least A(3), B(3), C, D, E, F, H, I and proteolipid K(x).

It is found in the cell membrane. Component of the A-type ATP synthase that produces ATP from ADP in the presence of a proton gradient across the membrane. The B chain is a regulatory subunit. The chain is A-type ATP synthase subunit B from Methanocorpusculum labreanum (strain ATCC 43576 / DSM 4855 / Z).